Reading from the N-terminus, the 295-residue chain is G1/S-specific cyclin-D1 (295 aa).

Positions 28–152 (LRAMLKAEET…LLVNKLKWNL (125 aa)) constitute a Cyclin N-terminal domain. Positions 262-295 (AQQNMDPKAAEEEEEEEEEVDLACTPTDVRDVDI) are disordered. A Glycyl lysine isopeptide (Lys-Gly) (interchain with G-Cter in ubiquitin) cross-link involves residue Lys269. Over residues 272–282 (EEEEEEEEEVD) the composition is skewed to acidic residues. Residue Thr286 is modified to Phosphothreonine.

This sequence belongs to the cyclin family. Cyclin D subfamily. In terms of assembly, interacts with either CDK4 or CDK6 protein kinase to form a serine/threonine kinase holoenzyme complex. The cyclin subunit imparts substrate specificity to the complex. Component of the ternary complex CCND1/CDK4/CDKN1B required for nuclear translocation and modulation of CDK4-mediated kinase activity. Interacts directly with CDKN1B. Can form similar complexes with either CDKN1A or CDKN2A. Interacts with UHRF2; the interaction ubiquitinates CCND1 and appears to occur independently of phosphorylation. Interacts with USP2. Interacts (via cyclin N-terminal domain) with INSM1 (via N-terminal region); the interaction competes with the binding of CCND1 to CDK4 during cell cycle progression and inhibits CDK4 activity. Interacts with CDK4; the interaction is prevented with the binding of CCND1 to INSM1 during cell cycle progression. Phosphorylation at Thr-286 by MAP kinases is required for ubiquitination and degradation by the DCX(AMBRA1) complex. It also plays an essential role for recognition by the FBXO31 component of SCF (SKP1-cullin-F-box) protein ligase complex following DNA damage. In terms of processing, ubiquitinated at Lys-269 by the DCX(AMBRA1) complex during the transition from G1 to S cell phase, leading to its degradation: ubiquitination is dependent on Thr-286 phosphorylation. The DCX(AMBRA1) complex represents the major regulator of CCND1 stability during the G1/S transition. Also ubiquitinated by the SCF(FBXO4) and Cul7-RING(FBXW8) ubiquitin-protein ligase complexes. Following DNA damage it is ubiquitinated by the SCF(FBXO31) protein ligase complex. SCF(FBXO31) ubiquitination is dependent on Thr-286 phosphorylation. Ubiquitinated also by UHRF2 apparently in a phosphorylation-independent manner. Ubiquitination leads to its degradation and G1 arrest. Deubiquitinated by USP2; leading to its stabilization.

The protein localises to the nucleus. It is found in the cytoplasm. Its subcellular location is the nucleus membrane. Functionally, regulatory component of the cyclin D1-CDK4 (DC) complex that phosphorylates and inhibits members of the retinoblastoma (RB) protein family including RB1 and regulates the cell-cycle during G(1)/S transition. Phosphorylation of RB1 allows dissociation of the transcription factor E2F from the RB/E2F complex and the subsequent transcription of E2F target genes which are responsible for the progression through the G(1) phase. Hypophosphorylates RB1 in early G(1) phase. Cyclin D-CDK4 complexes are major integrators of various mitogenenic and antimitogenic signals. Also a substrate for SMAD3, phosphorylating SMAD3 in a cell-cycle-dependent manner and repressing its transcriptional activity. Component of the ternary complex, cyclin D1/CDK4/CDKN1B, required for nuclear translocation and activity of the cyclin D-CDK4 complex. Exhibits transcriptional corepressor activity with INSM1 on the NEUROD1 and INS promoters in a cell cycle-independent manner. This Pongo abelii (Sumatran orangutan) protein is G1/S-specific cyclin-D1 (CCND1).